The chain runs to 462 residues: MDTGKIVQIIGPVIDVKFEISFIPKINFALEIKIKNKKLIMEVMQQIGDGIVRCILMGSSDGLKRGLKVFNLNKGIEVPVGKPTLGRIMNVLGDPIDRKGKILSSEYRPIHNKSPSYNEISSSDELLETGIKIIDLICPFAKGGKIGLFGGAGVGKTVNMMELIRNIAIEHSGYSVFSGVGERTREGNDFYNEMISSNVIDKVSLVYGQMNEPPGNRLRVALTGLTLAEKFRDEGNDVLFFVDNIYRYTLAGTEVSALLGRIPSAVGYQPTLSEEMGILQERITSTKSGSITSVQAIYVPADDLTDPSPATTFVHLDATVVLSRQIASLGIYPAIDPLDSTSRQLDPLIVGEDHYLVARKIQSILQRYKDLKDIIAILGIDELSEEDKILVSRARKIQRFLSQPFFVAEIFTGFSGKYVTLKDTIDGFNSIINGEYDYIPEQAFYMTGNISDVLDKYKKFYS.

ATP is bound at residue 150 to 157 (GGAGVGKT).

It belongs to the ATPase alpha/beta chains family. As to quaternary structure, F-type ATPases have 2 components, CF(1) - the catalytic core - and CF(0) - the membrane proton channel. CF(1) has five subunits: alpha(3), beta(3), gamma(1), delta(1), epsilon(1). CF(0) has three main subunits: a(1), b(2) and c(9-12). The alpha and beta chains form an alternating ring which encloses part of the gamma chain. CF(1) is attached to CF(0) by a central stalk formed by the gamma and epsilon chains, while a peripheral stalk is formed by the delta and b chains.

It localises to the cell membrane. It catalyses the reaction ATP + H2O + 4 H(+)(in) = ADP + phosphate + 5 H(+)(out). Its function is as follows. Produces ATP from ADP in the presence of a proton gradient across the membrane. The catalytic sites are hosted primarily by the beta subunits. This Wigglesworthia glossinidia brevipalpis protein is ATP synthase subunit beta.